Reading from the N-terminus, the 35-residue chain is Photosystem II reaction center protein Y (35 aa).

The Lumenal portion of the chain corresponds to 1–4 (MDTR). The chain crosses the membrane as a helical span at residues 5 to 23 (LLVVLLPVATAAAWALFNI). Residues 24–35 (GRLALQQLKRMS) are Stromal-facing.

This sequence belongs to the PsbY family. In terms of assembly, PSII is composed of 1 copy each of membrane proteins PsbA, PsbB, PsbC, PsbD, PsbE, PsbF, PsbH, PsbI, PsbJ, PsbK, PsbL, PsbM, PsbT, PsbX, PsbY, PsbZ, Psb30/Ycf12, at least 3 peripheral proteins of the oxygen-evolving complex and a large number of cofactors. It forms dimeric complexes.

It is found in the plastid. Its subcellular location is the chloroplast thylakoid membrane. Functionally, loosely associated component of the core of photosystem II (PSII), it is not always seen in crystals. PSII is a light-driven water plastoquinone oxidoreductase, using light energy to abstract electrons from H(2)O, generating a proton gradient subsequently used for ATP formation. The chain is Photosystem II reaction center protein Y from Emiliania huxleyi (Coccolithophore).